Reading from the N-terminus, the 196-residue chain is MLIGLTGTPGTGKTSVSKLLEKRRGWKVVYLNDLIKEEHLYSEVDEERDSVIADMELIRERLSGILEEEKGQHAEKAKVNGEEKENITIIESHLAHYITDIVIVLRAYPPELKKRLEKRGYSEEKINENAEAESIDLILAEAFEWCKKVFEVNTTGRTAEETLGDVEKIIDYILAGKENELQEYIPGSLDWIDSVP.

5 residues coordinate ATP: Gly10, Gly12, Lys13, Thr14, and Ser15. Positions 30 to 53 (YLNDLIKEEHLYSEVDEERDSVIA) are NMP. The segment at 118 to 128 (KRGYSEEKINE) is LID. ATP is bound at residue Arg119.

This sequence belongs to the adenylate kinase family. AK6 subfamily. Interacts with uS11. Not a structural component of 40S pre-ribosomes, but transiently interacts with them by binding to uS11.

The enzyme catalyses AMP + ATP = 2 ADP. It catalyses the reaction ATP + H2O = ADP + phosphate + H(+). In terms of biological role, broad-specificity nucleoside monophosphate (NMP) kinase that catalyzes the reversible transfer of the terminal phosphate group between nucleoside triphosphates and monophosphates. Also has ATPase activity. Involved in the late maturation steps of the 30S ribosomal particles, specifically 16S rRNA maturation. While NMP activity is not required for ribosome maturation, ATPase activity is. Associates transiently with small ribosomal subunit protein uS11. ATP hydrolysis breaks the interaction with uS11. May temporarily remove uS11 from the ribosome to enable a conformational change of the ribosomal RNA that is needed for the final maturation step of the small ribosomal subunit. The sequence is that of Putative adenylate kinase from Methanosarcina mazei (strain ATCC BAA-159 / DSM 3647 / Goe1 / Go1 / JCM 11833 / OCM 88) (Methanosarcina frisia).